Consider the following 211-residue polypeptide: QFKRRAKYKREPVSLTLALLLGGLTMGGIAAGVGTGTTALVATQQFQQLQAAMHDDLKKVEKSITNLEKSLTSLSEVVLQNRRGLDLLFLKEGGLCAALKEECCFYADHTGLVRDSMAKLRERLSQRQKLFESQQGWFEGLFNKSPWFTTLISTIMGPLIILLLILLFGPCILNRLVQFIKDRISVVQALVLTQQYHQLKSIDPEKVESRE.

Topologically, residues 1-151 (QFKRRAKYKR…FNKSPWFTTL (151 aa)) are extracellular. The tract at residues 13-33 (VSLTLALLLGGLTMGGIAAGV) is fusion peptide. Coiled-coil stretches lie at residues 41 to 90 (VATQ…LLFL) and 100 to 136 (KEEC…SQQG). The tract at residues 79–95 (LQNRRGLDLLFLKEGGL) is immunosuppression. Positions 96-104 (CAALKEECC) match the CX6CC motif. The chain crosses the membrane as a helical span at residues 152 to 172 (ISTIMGPLIILLLILLFGPCI). Residue Cys-171 is the site of S-palmitoyl cysteine; by host attachment. The Cytoplasmic segment spans residues 173–211 (LNRLVQFIKDRISVVQALVLTQQYHQLKSIDPEKVESRE). Residues 196-199 (YHQL) carry the YXXL motif; contains endocytosis signal motif.

In terms of assembly, the mature envelope protein (Env) consists of a trimer of SU-TM heterodimers attached by a labile interchain disulfide bond. Post-translationally, specific enzymatic cleavages in vivo yield mature proteins. Envelope glycoproteins are synthesized as an inactive precursor that is N-glycosylated and processed likely by host cell furin or by a furin-like protease in the Golgi to yield the mature SU and TM proteins. The cleavage site between SU and TM requires the minimal sequence [KR]-X-[KR]-R. The R-peptide is released from the C-terminus of the cytoplasmic tail of the TM protein upon particle formation as a result of proteolytic cleavage by the viral protease. Cleavage of this peptide is required for TM to become fusogenic. In terms of processing, the CXXC motif is highly conserved across a broad range of retroviral envelope proteins. It is thought to participate in the formation of a labile disulfide bond possibly with the CX6CC motif present in the transmembrane protein. Isomerization of the intersubunit disulfide bond to an SU intrachain disulfide bond is thought to occur upon receptor recognition in order to allow membrane fusion. The transmembrane protein is palmitoylated. Post-translationally, the R-peptide is palmitoylated.

The protein resides in the virion membrane. It localises to the host cell membrane. Its function is as follows. The surface protein (SU) attaches the virus to the host cell by binding to its receptor. This interaction triggers the refolding of the transmembrane protein (TM) and is thought to activate its fusogenic potential by unmasking its fusion peptide. Fusion occurs at the host cell plasma membrane. In terms of biological role, the transmembrane protein (TM) acts as a class I viral fusion protein. Under the current model, the protein has at least 3 conformational states: pre-fusion native state, pre-hairpin intermediate state, and post-fusion hairpin state. During viral and target cell membrane fusion, the coiled coil regions (heptad repeats) assume a trimer-of-hairpins structure, positioning the fusion peptide in close proximity to the C-terminal region of the ectodomain. The formation of this structure appears to drive apposition and subsequent fusion of viral and target cell membranes. Membranes fusion leads to delivery of the nucleocapsid into the cytoplasm. The protein is Envelope glycoprotein (env) of Mus musculus (Mouse).